The sequence spans 93 residues: DNA-directed RNA polymerase subunit omega (93 aa).

This sequence belongs to the RNA polymerase subunit omega family. As to quaternary structure, the RNAP catalytic core consists of 2 alpha, 1 beta, 1 beta' and 1 omega subunit. When a sigma factor is associated with the core the holoenzyme is formed, which can initiate transcription.

The enzyme catalyses RNA(n) + a ribonucleoside 5'-triphosphate = RNA(n+1) + diphosphate. Its function is as follows. Promotes RNA polymerase assembly. Latches the N- and C-terminal regions of the beta' subunit thereby facilitating its interaction with the beta and alpha subunits. This is DNA-directed RNA polymerase subunit omega from Shewanella loihica (strain ATCC BAA-1088 / PV-4).